A 511-amino-acid chain; its full sequence is Exodeoxyribonuclease 7 large subunit (511 aa).

Belongs to the XseA family. Heterooligomer composed of large and small subunits.

It is found in the cytoplasm. It catalyses the reaction Exonucleolytic cleavage in either 5'- to 3'- or 3'- to 5'-direction to yield nucleoside 5'-phosphates.. Bidirectionally degrades single-stranded DNA into large acid-insoluble oligonucleotides, which are then degraded further into small acid-soluble oligonucleotides. This Brucella suis biovar 1 (strain 1330) protein is Exodeoxyribonuclease 7 large subunit.